The chain runs to 204 residues: Large ribosomal subunit protein bL25 (204 aa).

The protein belongs to the bacterial ribosomal protein bL25 family. CTC subfamily. Part of the 50S ribosomal subunit; part of the 5S rRNA/L5/L18/L25 subcomplex. Contacts the 5S rRNA. Binds to the 5S rRNA independently of L5 and L18.

Its function is as follows. This is one of the proteins that binds to the 5S RNA in the ribosome where it forms part of the central protuberance. In Bordetella bronchiseptica (strain ATCC BAA-588 / NCTC 13252 / RB50) (Alcaligenes bronchisepticus), this protein is Large ribosomal subunit protein bL25.